We begin with the raw amino-acid sequence, 179 residues long: Cell division protein SepF (179 aa).

The disordered stretch occupies residues 18 to 55 (EDSSLPYEKRDEPVFTPVNSSQEPALPMNQPSQSAGTK). A compositionally biased stretch (polar residues) spans 34–55 (PVNSSQEPALPMNQPSQSAGTK).

Belongs to the SepF family. Homodimer. Interacts with FtsZ.

The protein localises to the cytoplasm. Its function is as follows. Cell division protein that is part of the divisome complex and is recruited early to the Z-ring. Probably stimulates Z-ring formation, perhaps through the cross-linking of FtsZ protofilaments. Its function overlaps with FtsA. The polypeptide is Cell division protein SepF (Streptococcus pneumoniae (strain ATCC 700669 / Spain 23F-1)).